A 632-amino-acid chain; its full sequence is Polyadenylate-binding protein, cytoplasmic and nuclear (632 aa).

Polar residues predominate over residues 1–11 (MSAADANQLQE). Residues 1 to 43 (MSAADANQLQESLEKLNLDSAPAAAEEEAVAAESAPAGEEGAD) form a disordered region. Low complexity predominate over residues 31–43 (AAESAPAGEEGAD). RRM domains lie at 52–130 (ASLY…WSQR), 140–217 (GNIF…KHIS), 233–310 (TNIY…RAQK), and 336–413 (VNLF…LAQR). Positions 534–615 (QQRDLAAIIA…ALTAFEEYKN (82 aa)) constitute a PABC domain.

The protein belongs to the polyadenylate-binding protein type-1 family.

The protein resides in the cytoplasm. The protein localises to the nucleus. Its function is as follows. Binds the poly(A) tail of mRNA. Appears to be an important mediator of the multiple roles of the poly(A) tail in mRNA biogenesis, stability and translation. In the nucleus, involved in both mRNA cleavage and polyadenylation. Is also required for efficient mRNA export to the cytoplasm. Acts in concert with a poly(A)-specific nuclease (PAN) to affect poly(A) tail shortening, which may occur concomitantly with either nucleocytoplasmic mRNA transport or translational initiation. In the cytoplasm, stimulates translation initiation and regulates mRNA decay through translation termination-coupled poly(A) shortening, probably mediated by PAN. The polypeptide is Polyadenylate-binding protein, cytoplasmic and nuclear (PAB1) (Scheffersomyces stipitis (strain ATCC 58785 / CBS 6054 / NBRC 10063 / NRRL Y-11545) (Yeast)).